The following is a 161-amino-acid chain: Cyclic pyranopterin monophosphate synthase (161 aa).

Substrate-binding positions include 75 to 77 and 113 to 114; these read LCH and ME. Residue Asp128 is part of the active site.

It belongs to the MoaC family. As to quaternary structure, homohexamer; trimer of dimers.

The enzyme catalyses (8S)-3',8-cyclo-7,8-dihydroguanosine 5'-triphosphate = cyclic pyranopterin phosphate + diphosphate. It participates in cofactor biosynthesis; molybdopterin biosynthesis. Catalyzes the conversion of (8S)-3',8-cyclo-7,8-dihydroguanosine 5'-triphosphate to cyclic pyranopterin monophosphate (cPMP). This is Cyclic pyranopterin monophosphate synthase from Salmonella dublin (strain CT_02021853).